Here is a 199-residue protein sequence, read N- to C-terminus: Fe/S biogenesis protein NfuA (199 aa).

The [4Fe-4S] cluster site is built by Cys151 and Cys154.

The protein belongs to the NfuA family. As to quaternary structure, homodimer. The cofactor is [4Fe-4S] cluster.

Involved in iron-sulfur cluster biogenesis. Binds a 4Fe-4S cluster, can transfer this cluster to apoproteins, and thereby intervenes in the maturation of Fe/S proteins. Could also act as a scaffold/chaperone for damaged Fe/S proteins. In Xanthomonas euvesicatoria pv. vesicatoria (strain 85-10) (Xanthomonas campestris pv. vesicatoria), this protein is Fe/S biogenesis protein NfuA.